The primary structure comprises 203 residues: Thymidylate kinase (203 aa).

7–14 (GGEGAGKT) serves as a coordination point for ATP.

The protein belongs to the thymidylate kinase family.

The enzyme catalyses dTMP + ATP = dTDP + ADP. Phosphorylation of dTMP to form dTDP in both de novo and salvage pathways of dTTP synthesis. This Chlamydia trachomatis serovar D (strain ATCC VR-885 / DSM 19411 / UW-3/Cx) protein is Thymidylate kinase (tmk).